Here is a 92-residue protein sequence, read N- to C-terminus: MSETTLNDIPQLRRGFRFQWEPAQNCHVLLYPEGMVKLNDSAAAILGQVDGDRSIAAIVAALRERFPESDGIEEDVLEFLEVARERSWIELH.

Belongs to the PqqD family. Monomer. Interacts with PqqE.

The protein operates within cofactor biosynthesis; pyrroloquinoline quinone biosynthesis. Functions as a PqqA binding protein and presents PqqA to PqqE, in the pyrroloquinoline quinone (PQQ) biosynthetic pathway. The chain is PqqA binding protein from Azotobacter vinelandii (strain DJ / ATCC BAA-1303).